Here is a 399-residue protein sequence, read N- to C-terminus: uncharacterized protein (399 aa).

Residues 1–8 are Cytoplasmic-facing; the sequence is MHNLQVRR. The helical transmembrane segment at 9–35 threads the bilayer; it reads HYAALKGFYLFAFLGTGSIIPLLSMYL. At 36 to 42 the chain is on the extracellular side; that stretch reads TKEQHLS. The helical transmembrane segment at 43-71 threads the bilayer; that stretch reads GSQVGLIMSLGPIVMIFFQPFWGMLSDYT. Topologically, residues 72–75 are cytoplasmic; sequence QKTK. A helical membrane pass occupies residues 76-101; that stretch reads GLLAVCTSITGIIGLAYIAFDSFPLF. Topologically, residues 102–105 are extracellular; it reads ILIA. A helical membrane pass occupies residues 106–123; that stretch reads ACFAAFQSTIIPLSDSIS. Residues 124 to 134 lie on the Cytoplasmic side of the membrane; that stretch reads LRYTQETNGNY. A helical membrane pass occupies residues 135 to 157; it reads GGIRLFGSLGFGVAVFAMGQVTN. Over 158–160 the chain is Extracellular; it reads QLY. A helical membrane pass occupies residues 161–180; sequence PIHVIFIFGCAFLCIAAILA. The Cytoplasmic segment spans residues 181–210; it reads SQVPGQQKTTKVNIRKGFRELISNKTFLIF. Residues 211-230 traverse the membrane as a helical segment; that stretch reads MIITFTTFAPNLANNTYFSL. At 231–234 the chain is on the extracellular side; sequence FLDK. A helical membrane pass occupies residues 235-259; it reads SGASLSAIGILFFIGVISEIPFMRF. Residues 260–269 are Cytoplasmic-facing; the sequence is AQTFIDKMGL. The chain crosses the membrane as a helical span at residues 270 to 289; that stretch reads LNVIMLSGGVSLFRWALYFT. The Extracellular portion of the chain corresponds to 290–292; the sequence is APS. The helical transmembrane segment at 293–315 threads the bilayer; sequence LWIIYATVFLQGVAIGLFIPAAL. Residues 316–327 lie on the Cytoplasmic side of the membrane; the sequence is QYVKKITPRHVE. Residues 328–355 form a helical membrane-spanning segment; sequence ATALTMYAAIGNGFGNWFCTFAGGYIFD. Residues 356–358 are Extracellular-facing; the sequence is YVS. The helical transmembrane segment at 359–379 threads the bilayer; that stretch reads IFAVYLLFGILSIAGFGLTLY. Residues 380–399 are Cytoplasmic-facing; the sequence is LMKAEKNKHTLHQPAVTFKP.

The protein belongs to the major facilitator superfamily.

It is found in the cell membrane. This is an uncharacterized protein from Bacillus subtilis (strain 168).